An 87-amino-acid chain; its full sequence is Small ribosomal subunit protein bS20 (87 aa).

The protein belongs to the bacterial ribosomal protein bS20 family.

Its function is as follows. Binds directly to 16S ribosomal RNA. This chain is Small ribosomal subunit protein bS20, found in Halothermothrix orenii (strain H 168 / OCM 544 / DSM 9562).